The primary structure comprises 168 residues: Profilin-3 (168 aa).

Residues 14–36 form a disordered region; that stretch reads LSLEHSDKPQRRSRAKVKKKKKT. A compositionally biased stretch (basic residues) spans 24 to 36; the sequence is RRSRAKVKKKKKT.

This sequence belongs to the profilin family. In terms of assembly, occurs in many kinds of cells as a complex with monomeric actin in a 1:1 ratio. Binding to the poly-proline motif of formins induces formation of oligomers through the N-terminal hydrophobic residues of PRF3. Expressed in roots, rosette leaves, cauline leaves, stems and flowers.

The protein localises to the cytoplasm. The protein resides in the cytoskeleton. Functionally, binds to actin monomers and regulates the organization of the actin cytoskeleton. Can increase the critical concentration (Cc) of actin assembly in vitro. Acts as a downstream effector of the hydrogen sulfide signaling to regulate the assembly and depolymerization of F-actin. At high concentrations, profilin prevents the polymerization of actin, whereas it enhances it at low concentrations. Binding to the poly-proline motif of formin induces oligomerization of PRF3. PRF3 oligomers inhibit formin-mediated actin assembly to modulate plant immunity triggered by pathogen-associated molecular patterns (PAMPs). The sequence is that of Profilin-3 from Arabidopsis thaliana (Mouse-ear cress).